Consider the following 188-residue polypeptide: dCTP deaminase (188 aa).

DCTP-binding positions include 111 to 116 (KSTYAR), 135 to 137 (TLE), Q156, Y170, and Q180. E137 functions as the Proton donor/acceptor in the catalytic mechanism.

The protein belongs to the dCTP deaminase family. In terms of assembly, homotrimer.

The catalysed reaction is dCTP + H2O + H(+) = dUTP + NH4(+). It participates in pyrimidine metabolism; dUMP biosynthesis; dUMP from dCTP (dUTP route): step 1/2. Catalyzes the deamination of dCTP to dUTP. This chain is dCTP deaminase, found in Azotobacter vinelandii (strain DJ / ATCC BAA-1303).